The primary structure comprises 492 residues: MTRKRFLCPSVCRSRAARTGESKRRRLHSHDRRRCAITPDFDEDGRMAHIANPRPNPLECAEASQKVIMAPSRSDTTGAHRCLEDAAPVGELLVPRSSADLHESQRGQPSGATDSQASTLETESAPPSADSSSSAKLQRDDEFLAKYRVIGTLPAGSFGKILVCALRASVGEAEASRVPRSERRVAKRVRATSRLAIYLENEILALQYMNHENILKVEEVLRSEAYTYMITRKYDYDLYSFMYDGDLQWKDRPLLWQTRAIMKQLLCAVEYMHDKLLMHRDIKLENVFLNGDGTIVLGDLGTAMTFEKPRVARDYGWVGTVTTNSPEMLAGDGYCEITDLWSCGLIMLDMLSKDLLPLNGNTKKPGKQLRRIIRSLSVCDEEFPDPPCKLFDYIDSAEYTHTPMSVPPLIRRMGLPADFEYPLVKMLTFDWHRRPGASELLALPLFSSTITEERLFVWGLKSGAAHFSSWKPACRIESDTAALSLTMSDDDE.

Positions alanine 99–leucine 137 are disordered. Over residues arginine 106–threonine 122 the composition is skewed to polar residues. Residues serine 124–alanine 135 show a composition bias toward low complexity. In terms of domain architecture, Protein kinase spans tyrosine 147–phenylalanine 446. ATP-binding positions include leucine 153–isoleucine 161 and lysine 187. Aspartate 281 (proton acceptor) is an active-site residue.

It belongs to the protein kinase superfamily. Ser/Thr protein kinase family. Post-translationally, phosphorylated by UL13 homolog; this phosphorylation regulates subsequent phosphorylation of UL31 and UL34 homologs by US3. Autophosphorylated.

It is found in the host cytoplasm. The protein resides in the host nucleus. It catalyses the reaction L-seryl-[protein] + ATP = O-phospho-L-seryl-[protein] + ADP + H(+). It carries out the reaction L-threonyl-[protein] + ATP = O-phospho-L-threonyl-[protein] + ADP + H(+). Multifunctional serine/threonine kinase that plays a role in several processes including egress of virus particles from the nucleus, modulation of the actin cytoskeleton and inhibition of apoptosis. Phosphorylates UL31 and UL34 homologs, two critical regulators of capsid budding from nucleus to endoplasmic reticulum, thereby facilitating virion egress. Modulates and redistributes host components of the nuclear envelope, including LMNA, emerin/EMD and the nuclear matrix protein MATR3. Phosphorylates envelope glycoprotein B (gB), probably to direct it to the cell surface. Promotes virus intracellular spread by restructuring host cell cytoskeleton. Blocks host apoptosis to extend cell survival and allow efficient viral replication. Promotes viral gene expression by phosphorylating host HDAC2 to reduce viral genome silencing. The chain is Protein kinase US3 homolog (US3) from Amazona oratrix (yellow-headed parrot).